We begin with the raw amino-acid sequence, 86 residues long: Alpha-mammal toxin Ts3 (86 aa).

An N-terminal signal peptide occupies residues 1 to 19 (MNYFILLVVVCLLTAGTEG). An LCN-type CS-alpha/beta domain is found at 21–82 (KDGYPVEYDN…EPTKTNGKCK (62 aa)). Disulfide bonds link cysteine 31/cysteine 81, cysteine 35/cysteine 57, cysteine 43/cysteine 64, and cysteine 47/cysteine 66. Serine 83 carries the post-translational modification Serine amide.

In terms of tissue distribution, expressed by the venom gland.

The protein resides in the secreted. Alpha toxins bind voltage-independently at site-3 of sodium channels (Nav) and inhibit the inactivation of the activated channels, thereby blocking neuronal transmission. This synthetic toxin inhibits inactivation of rat Nav1.4/SCN4A (when tested at 201 nM). In addition, it has been shown to cause a persistent sodium channel activation in nitrergic inhibitory fibers innervating the rabbit corpus cavernosum, resulting in NO release and cavernosal smooth muscle relaxation. This toxin is active against mammals. In terms of biological role, this synthetic peptide with a Ser at position 31 (C12S) acts as a bradykinin-potentiating peptide (BPP). Induces endothelium-dependent vasodilation that is reverted by NO synthase inhibitor, suggesting it activates molecular targets on vascular endothelium leading to NO production and vasodilation. It appears to induce vasodilation through muscarinic acetylcholine receptors (AChR) M2 (CHRM2) and M3 (CHRM3). Does not inhibit the angiotensin-converting enzyme (ACE). Does not act via bradykinin B2 receptor. This chain is Alpha-mammal toxin Ts3, found in Tityus serrulatus (Brazilian scorpion).